Consider the following 320-residue polypeptide: Cytochrome f (320 aa).

A signal peptide spans 1-35 (MQTRKTFSWIKEQINRSISVSLMIYIITRPSISIA). The heme site is built by Tyr36, Cys56, Cys59, and His60. Residues 286 to 306 (VQGLLFFLASVILAQIFLVLK) form a helical membrane-spanning segment.

Belongs to the cytochrome f family. In terms of assembly, the 4 large subunits of the cytochrome b6-f complex are cytochrome b6, subunit IV (17 kDa polypeptide, petD), cytochrome f and the Rieske protein, while the 4 small subunits are PetG, PetL, PetM and PetN. The complex functions as a dimer. Heme is required as a cofactor.

It is found in the plastid. It localises to the chloroplast thylakoid membrane. Component of the cytochrome b6-f complex, which mediates electron transfer between photosystem II (PSII) and photosystem I (PSI), cyclic electron flow around PSI, and state transitions. The chain is Cytochrome f from Daucus carota (Wild carrot).